Consider the following 66-residue polypeptide: Early E3 7.7 kDa protein (66 aa).

N-linked (GlcNAc...) asparagine; by host glycans are attached at residues Asn7 and Asn24. Residues 44-64 (ITILIVIGILILSVILYFLFS) traverse the membrane as a helical segment.

Its subcellular location is the host nucleus membrane. This chain is Early E3 7.7 kDa protein, found in Human adenovirus B serotype 7 (HAdV-7).